The chain runs to 359 residues: Isopentenyl-diphosphate delta-isomerase (359 aa).

Residue 12-13 coordinates substrate; sequence RK. Residues serine 68, 69–71, serine 99, and asparagine 128 each bind FMN; that span reads AMT. 99-101 serves as a coordination point for substrate; the sequence is SQR. Glutamine 162 contributes to the substrate binding site. Glutamate 163 lines the Mg(2+) pocket. Residues lysine 194, threonine 224, 277–279, and 298–299 each bind FMN; these read GIR and AL.

This sequence belongs to the IPP isomerase type 2 family. Homooctamer. Dimer of tetramers. FMN is required as a cofactor. The cofactor is NADPH. It depends on Mg(2+) as a cofactor.

The protein localises to the cytoplasm. It catalyses the reaction isopentenyl diphosphate = dimethylallyl diphosphate. Involved in the biosynthesis of isoprenoids. Catalyzes the 1,3-allylic rearrangement of the homoallylic substrate isopentenyl (IPP) to its allylic isomer, dimethylallyl diphosphate (DMAPP). This is Isopentenyl-diphosphate delta-isomerase from Methanoregula boonei (strain DSM 21154 / JCM 14090 / 6A8).